A 230-amino-acid chain; its full sequence is Demethylmenaquinone methyltransferase (230 aa).

S-adenosyl-L-methionine-binding positions include threonine 57, aspartate 77, and 101–102; that span reads DI.

The protein belongs to the class I-like SAM-binding methyltransferase superfamily. MenG/UbiE family.

It catalyses the reaction a 2-demethylmenaquinol + S-adenosyl-L-methionine = a menaquinol + S-adenosyl-L-homocysteine + H(+). It participates in quinol/quinone metabolism; menaquinone biosynthesis; menaquinol from 1,4-dihydroxy-2-naphthoate: step 2/2. In terms of biological role, methyltransferase required for the conversion of demethylmenaquinol (DMKH2) to menaquinol (MKH2). This chain is Demethylmenaquinone methyltransferase, found in Chlamydia pneumoniae (Chlamydophila pneumoniae).